The chain runs to 193 residues: Ion-translocating oxidoreductase complex subunit A (193 aa).

The next 6 membrane-spanning stretches (helical) occupy residues 5 to 25, 39 to 59, 63 to 83, 102 to 122, 134 to 154, and 171 to 191; these read LLLF…FLGL, MGMG…AWLI, ILIP…VIAV, LLGI…VALL, ALYG…FAAI, and AIAL…SGLV.

This sequence belongs to the NqrDE/RnfAE family. As to quaternary structure, the complex is composed of six subunits: RsxA, RsxB, RsxC, RsxD, RsxE and RsxG.

The protein localises to the cell inner membrane. Functionally, part of a membrane-bound complex that couples electron transfer with translocation of ions across the membrane. Required to maintain the reduced state of SoxR. This chain is Ion-translocating oxidoreductase complex subunit A, found in Escherichia fergusonii (strain ATCC 35469 / DSM 13698 / CCUG 18766 / IAM 14443 / JCM 21226 / LMG 7866 / NBRC 102419 / NCTC 12128 / CDC 0568-73).